Reading from the N-terminus, the 561-residue chain is DNA ligase B (561 aa).

Lysine 125 (N6-AMP-lysine intermediate) is an active-site residue.

Belongs to the NAD-dependent DNA ligase family. LigB subfamily.

The enzyme catalyses NAD(+) + (deoxyribonucleotide)n-3'-hydroxyl + 5'-phospho-(deoxyribonucleotide)m = (deoxyribonucleotide)n+m + AMP + beta-nicotinamide D-nucleotide.. In terms of biological role, catalyzes the formation of phosphodiester linkages between 5'-phosphoryl and 3'-hydroxyl groups in double-stranded DNA using NAD as a coenzyme and as the energy source for the reaction. The chain is DNA ligase B from Salmonella arizonae (strain ATCC BAA-731 / CDC346-86 / RSK2980).